The primary structure comprises 550 residues: Transcription factor p65 (550 aa).

M1 bears the N-acetylmethionine mark. An RHD domain is found at 16 to 190 (ASGPYVEIIE…HPIFDNRAPN (175 aa)). A Glycyl lysine isopeptide (Lys-Gly) (interchain with G-Cter in SUMO3) cross-link involves residue K37. Cysteine persulfide; alternate is present on C38. Residue C38 is modified to S-nitrosocysteine; alternate. An N6-acetyllysine mark is found at K122, K123, K218, and K221. Glycyl lysine isopeptide (Lys-Gly) (interchain with G-Cter in SUMO3); alternate cross-links involve residues K122 and K123. T254 bears the Phosphothreonine mark. A phosphoserine mark is found at S276 and S281. Residues 301 to 304 (KRKR) carry the Nuclear localization signal motif. K310 is modified (N6-acetyllysine; alternate). K310 is modified (N6-methyllysine). S311 is modified (phosphoserine). Transcriptional activation domain stretches follow at residues 342 to 388 (PKPA…APVL) and 414 to 476 (PGPP…EFQQ). T434 carries the phosphothreonine modification. A Phosphoserine modification is found at S468. Residue T505 is modified to Phosphothreonine. The interval 520-550 (TSGLPNGLSGDEDFSSIADMDFSALLSQISS) is transcriptional activation domain 2. S535 is modified (phosphoserine). Residues 535-543 (SIADMDFSA) carry the 9aaTAD motif.

As to quaternary structure, component of the NF-kappa-B p65-p50 complex. Component of the NF-kappa-B p65-c-Rel complex. Homodimer; component of the NF-kappa-B p65-p65 complex. Component of the NF-kappa-B p65-p52 complex. May interact with ETHE1. Binds TLE5 and TLE1. Interacts with TP53BP2. Binds to and is phosphorylated by the activated form of either RPS6KA4 or RPS6KA5. Interacts with ING4 and this interaction may be indirect. Interacts with CARM1, USP48 and UNC5CL. Interacts with IRAK1BP1. Interacts with NFKBID. Interacts with NFKBIA. Interacts with GSK3B. Interacts with NFKBIB. Interacts with NFKBIE. Interacts with NFKBIZ. Interacts with EHMT1 (via ANK repeats). Part of a 70-90 kDa complex at least consisting of CHUK, IKBKB, NFKBIA, RELA, ELP1 and MAP3K14. Interacts with HDAC3; HDAC3 mediates the deacetylation of RELA. Interacts with HDAC1; the interaction requires non-phosphorylated RELA. Interacts with CBP; the interaction requires phosphorylated RELA. Interacts (phosphorylated at 'Thr-254') with PIN1; the interaction inhibits p65 binding to NFKBIA. Interacts with SOCS1. Interacts with UXT. Interacts with MTDH and PHF11. Interacts with ARRB2. Interacts with NFKBIA (when phosphorylated), the interaction is direct; phosphorylated NFKBIA is part of a SCF(BTRC)-like complex lacking CUL1. Interacts with RNF25. Interacts (via C-terminus) with DDX1. Interacts with UFL1 and COMMD1. Interacts with BRMS1; this promotes deacetylation of 'Lys-310'. Interacts with NOTCH2. Directly interacts with MEN1; this interaction represses NFKB-mediated transactivation. Interacts with AKIP1, which promotes the phosphorylation and nuclear retention of RELA. Interacts (via the RHD) with GFI1; the interaction, after bacterial lipopolysaccharide (LPS) stimulation, inhibits the transcriptional activity by interfering with the DNA-binding activity to target gene promoter DNA. Interacts (when acetylated at Lys-310) with BRD4; leading to activation of the NF-kappa-B pathway. Interacts with MEFV. Interacts with CLOCK. Interacts (via N-terminus) with CPEN1; this interaction induces proteolytic cleavage of p65/RELA subunit and inhibition of NF-kappa-B transcriptional activity. Interacts with FOXP3. Interacts with CDK5RAP3; stimulates the interaction of RELA with HDAC1, HDAC2 and HDAC3 thereby inhibiting NF-kappa-B transcriptional activity. Interacts with DHX9; this interaction is direct and activates NF-kappa-B-mediated transcription. Interacts with LRRC25. Interacts with TBX21. Interacts with KAT2A. Interacts with ZBTB7A; involved in the control by RELA of the accessibility of target gene promoters. Directly interacts with DDX3X; this interaction may trap RELA in the cytoplasm, impairing nuclear relocalization upon TNF activating signals. Interacts with PHF2. Interacts with MKRN2; the interaction leads to its polyubiquitination and proteasome-dependent degradation. Interacts with ECSIT. Interacts with RAB28; the interaction contributes to RELA transport from cytoplasm to nucleus. In terms of processing, ubiquitinated by RNF182, leading to its proteasomal degradation. Degradation is required for termination of NF-kappa-B response. Polyubiquitinated via 'Lys-29'-linked ubiquitin; leading to lysosomal degradation. Monomethylated at Lys-310 by SETD6. Monomethylation at Lys-310 is recognized by the ANK repeats of EHMT1 and promotes the formation of repressed chromatin at target genes, leading to down-regulation of NF-kappa-B transcription factor activity. Phosphorylation at Ser-311 disrupts the interaction with EHMT1 without preventing monomethylation at Lys-310 and relieves the repression of target genes. Post-translationally, phosphorylation at Ser-311 disrupts the interaction with EHMT1 and promotes transcription factor activity. Phosphorylation on Ser-535 stimulates acetylation on Lys-310 and interaction with CBP; the phosphorylated and acetylated forms show enhanced transcriptional activity. Phosphorylation at Ser-276 by RPS6KA4 and RPS6KA5 promotes its transactivation and transcriptional activities. In terms of processing, phosphorylation at Ser-75 by herpes simplex virus 1/HHV-1 inhibits NF-kappa-B activation. Reversibly acetylated; the acetylation seems to be mediated by CBP, the deacetylation by HDAC3 and SIRT2. Acetylation at Lys-122 enhances DNA binding and impairs association with NFKBIA. Acetylation at Lys-310 is required for full transcriptional activity in the absence of effects on DNA binding and NFKBIA association. Acetylation at Lys-310 promotes interaction with BRD4. Acetylation can also lower DNA-binding and results in nuclear export. Interaction with BRMS1 promotes deacetylation of Lys-310. Lys-310 is deacetylated by SIRT2. Post-translationally, S-nitrosylation of Cys-38 inactivates the enzyme activity. In terms of processing, sulfhydration at Cys-38 mediates the anti-apoptotic activity by promoting the interaction with RPS3 and activating the transcription factor activity. Sumoylation by PIAS3 negatively regulates DNA-bound activated NF-kappa-B. Post-translationally, proteolytically cleaved within a conserved N-terminus region required for base-specific contact with DNA in a CPEN1-mediated manner, and hence inhibits NF-kappa-B transcriptional activity.

The protein localises to the nucleus. It localises to the cytoplasm. Functionally, NF-kappa-B is a pleiotropic transcription factor present in almost all cell types and is the endpoint of a series of signal transduction events that are initiated by a vast array of stimuli related to many biological processes such as inflammation, immunity, differentiation, cell growth, tumorigenesis and apoptosis. NF-kappa-B is a homo- or heterodimeric complex formed by the Rel-like domain-containing proteins RELA/p65, RELB, NFKB1/p105, NFKB1/p50, REL and NFKB2/p52. The heterodimeric RELA-NFKB1 complex appears to be most abundant one. The dimers bind at kappa-B sites in the DNA of their target genes and the individual dimers have distinct preferences for different kappa-B sites that they can bind with distinguishable affinity and specificity. Different dimer combinations act as transcriptional activators or repressors, respectively. The NF-kappa-B heterodimeric RELA-NFKB1 and RELA-REL complexes, for instance, function as transcriptional activators. NF-kappa-B is controlled by various mechanisms of post-translational modification and subcellular compartmentalization as well as by interactions with other cofactors or corepressors. NF-kappa-B complexes are held in the cytoplasm in an inactive state complexed with members of the NF-kappa-B inhibitor (I-kappa-B) family. In a conventional activation pathway, I-kappa-B is phosphorylated by I-kappa-B kinases (IKKs) in response to different activators, subsequently degraded thus liberating the active NF-kappa-B complex which translocates to the nucleus. The inhibitory effect of I-kappa-B on NF-kappa-B through retention in the cytoplasm is exerted primarily through the interaction with RELA. RELA shows a weak DNA-binding site which could contribute directly to DNA binding in the NF-kappa-B complex. Besides its activity as a direct transcriptional activator, it is also able to modulate promoters accessibility to transcription factors and thereby indirectly regulate gene expression. Associates with chromatin at the NF-kappa-B promoter region via association with DDX1. Essential for cytokine gene expression in T-cells. The NF-kappa-B homodimeric RELA-RELA complex appears to be involved in invasin-mediated activation of IL-8 expression. Key transcription factor regulating the IFN response during SARS-CoV-2 infection. In Rattus norvegicus (Rat), this protein is Transcription factor p65.